The chain runs to 472 residues: Trigger factor (472 aa).

In terms of domain architecture, PPIase FKBP-type spans 174–261 (GDIALVSFKG…LEDLKIKELP (88 aa)). Residues 433–472 (NNTVVEKPPEKARDQIKEKSSKKKTTKTNKEKKSSKTPKS) form a disordered region. The span at 439-451 (KPPEKARDQIKEK) shows a compositional bias: basic and acidic residues.

It belongs to the FKBP-type PPIase family. Tig subfamily.

The protein resides in the cytoplasm. The catalysed reaction is [protein]-peptidylproline (omega=180) = [protein]-peptidylproline (omega=0). Functionally, involved in protein export. Acts as a chaperone by maintaining the newly synthesized protein in an open conformation. Functions as a peptidyl-prolyl cis-trans isomerase. This chain is Trigger factor, found in Prochlorococcus marinus (strain NATL1A).